A 502-amino-acid polypeptide reads, in one-letter code: ATP synthase subunit alpha (502 aa).

169-176 (GDRQTGKT) contributes to the ATP binding site.

This sequence belongs to the ATPase alpha/beta chains family. As to quaternary structure, F-type ATPases have 2 components, CF(1) - the catalytic core - and CF(0) - the membrane proton channel. CF(1) has five subunits: alpha(3), beta(3), gamma(1), delta(1), epsilon(1). CF(0) has three main subunits: a(1), b(2) and c(9-12). The alpha and beta chains form an alternating ring which encloses part of the gamma chain. CF(1) is attached to CF(0) by a central stalk formed by the gamma and epsilon chains, while a peripheral stalk is formed by the delta and b chains.

The protein localises to the cell membrane. It carries out the reaction ATP + H2O + 4 H(+)(in) = ADP + phosphate + 5 H(+)(out). Its function is as follows. Produces ATP from ADP in the presence of a proton gradient across the membrane. The alpha chain is a regulatory subunit. The sequence is that of ATP synthase subunit alpha from Staphylococcus aureus (strain COL).